Reading from the N-terminus, the 176-residue chain is Ribosome rescue factor SmrB (176 aa).

The Smr domain maps to 97-172 (LDMHGMTQQE…GDGALLVLLS (76 aa)).

This sequence belongs to the SmrB family. Associates with collided ribosomes, but not with correctly translating polysomes.

Its function is as follows. Acts as a ribosome collision sensor. Detects stalled/collided disomes (pairs of ribosomes where the leading ribosome is stalled and a second ribosome has collided with it) and endonucleolytically cleaves mRNA at the 5' boundary of the stalled ribosome. Stalled/collided disomes form a new interface (primarily via the 30S subunits) that binds SmrB. Cleaved mRNA becomes available for tmRNA ligation, leading to ribosomal subunit dissociation and rescue of stalled ribosomes. The polypeptide is Ribosome rescue factor SmrB (Vibrio campbellii (strain ATCC BAA-1116)).